The following is a 343-amino-acid chain: Anthranilate phosphoribosyltransferase (343 aa).

5-phospho-alpha-D-ribose 1-diphosphate is bound by residues glycine 84, 87-88 (GD), threonine 92, 94-97 (NIST), 112-120 (KHGNRGVSS), and serine 124. An anthranilate-binding site is contributed by glycine 84. Residue serine 96 participates in Mg(2+) binding. Asparagine 115 lines the anthranilate pocket. Arginine 170 contacts anthranilate. Mg(2+) is bound by residues aspartate 229 and glutamate 230.

This sequence belongs to the anthranilate phosphoribosyltransferase family. In terms of assembly, homodimer. Mg(2+) serves as cofactor.

It carries out the reaction N-(5-phospho-beta-D-ribosyl)anthranilate + diphosphate = 5-phospho-alpha-D-ribose 1-diphosphate + anthranilate. It participates in amino-acid biosynthesis; L-tryptophan biosynthesis; L-tryptophan from chorismate: step 2/5. Its function is as follows. Catalyzes the transfer of the phosphoribosyl group of 5-phosphorylribose-1-pyrophosphate (PRPP) to anthranilate to yield N-(5'-phosphoribosyl)-anthranilate (PRA). This chain is Anthranilate phosphoribosyltransferase, found in Burkholderia orbicola (strain AU 1054).